The sequence spans 319 residues: Lipoyl synthase (319 aa).

The interval 1-32 (MVVLVDTVSSTPVRPRHPEKAARPDSLSPKKP) is disordered. Basic and acidic residues predominate over residues 16–32 (RHPEKAARPDSLSPKKP). [4Fe-4S] cluster-binding residues include Cys-61, Cys-66, Cys-72, Cys-87, Cys-91, Cys-94, and Ser-300. Positions 73 to 289 (WDKKHATFMI…GKTAYAKGFL (217 aa)) constitute a Radical SAM core domain.

This sequence belongs to the radical SAM superfamily. Lipoyl synthase family. [4Fe-4S] cluster serves as cofactor.

The protein resides in the cytoplasm. The catalysed reaction is [[Fe-S] cluster scaffold protein carrying a second [4Fe-4S](2+) cluster] + N(6)-octanoyl-L-lysyl-[protein] + 2 oxidized [2Fe-2S]-[ferredoxin] + 2 S-adenosyl-L-methionine + 4 H(+) = [[Fe-S] cluster scaffold protein] + N(6)-[(R)-dihydrolipoyl]-L-lysyl-[protein] + 4 Fe(3+) + 2 hydrogen sulfide + 2 5'-deoxyadenosine + 2 L-methionine + 2 reduced [2Fe-2S]-[ferredoxin]. The protein operates within protein modification; protein lipoylation via endogenous pathway; protein N(6)-(lipoyl)lysine from octanoyl-[acyl-carrier-protein]: step 2/2. Functionally, catalyzes the radical-mediated insertion of two sulfur atoms into the C-6 and C-8 positions of the octanoyl moiety bound to the lipoyl domains of lipoate-dependent enzymes, thereby converting the octanoylated domains into lipoylated derivatives. The chain is Lipoyl synthase from Rhodopseudomonas palustris (strain BisB5).